The following is a 194-amino-acid chain: Imidazole glycerol phosphate synthase subunit HisH (194 aa).

In terms of domain architecture, Glutamine amidotransferase type-1 spans 3-194 (RIAIVDLGIG…LILLRNFRRL (192 aa)). Cys-74 functions as the Nucleophile in the catalytic mechanism. Catalysis depends on residues His-176 and Glu-178.

In terms of assembly, heterodimer of HisH and HisF.

It localises to the cytoplasm. It carries out the reaction 5-[(5-phospho-1-deoxy-D-ribulos-1-ylimino)methylamino]-1-(5-phospho-beta-D-ribosyl)imidazole-4-carboxamide + L-glutamine = D-erythro-1-(imidazol-4-yl)glycerol 3-phosphate + 5-amino-1-(5-phospho-beta-D-ribosyl)imidazole-4-carboxamide + L-glutamate + H(+). It catalyses the reaction L-glutamine + H2O = L-glutamate + NH4(+). The protein operates within amino-acid biosynthesis; L-histidine biosynthesis; L-histidine from 5-phospho-alpha-D-ribose 1-diphosphate: step 5/9. Functionally, IGPS catalyzes the conversion of PRFAR and glutamine to IGP, AICAR and glutamate. The HisH subunit catalyzes the hydrolysis of glutamine to glutamate and ammonia as part of the synthesis of IGP and AICAR. The resulting ammonia molecule is channeled to the active site of HisF. The polypeptide is Imidazole glycerol phosphate synthase subunit HisH (Pyrococcus furiosus (strain ATCC 43587 / DSM 3638 / JCM 8422 / Vc1)).